Consider the following 344-residue polypeptide: Ion-translocating oxidoreductase complex subunit D (344 aa).

Helical transmembrane passes span 23–43 (LVLG…GAGT), 44–64 (LLNL…MLAL), 80–100 (VTAL…LTLV), and 120–140 (PFNP…LEMT). Position 172 is an FMN phosphoryl threonine (threonine 172). Helical transmembrane passes span 198–218 (LGGA…LFLL), 222–242 (LFTW…SLLF), 252–272 (GSPL…FIVT), 285–305 (LLFG…GGYP), and 306–326 (DGVA…DYYT).

It belongs to the NqrB/RnfD family. As to quaternary structure, the complex is composed of six subunits: RnfA, RnfB, RnfC, RnfD, RnfE and RnfG. It depends on FMN as a cofactor.

It localises to the cell inner membrane. Part of a membrane-bound complex that couples electron transfer with translocation of ions across the membrane. The protein is Ion-translocating oxidoreductase complex subunit D of Pseudomonas paraeruginosa (strain DSM 24068 / PA7) (Pseudomonas aeruginosa (strain PA7)).